Here is a 792-residue protein sequence, read N- to C-terminus: Ribonucleoside-diphosphate reductase large subunit (792 aa).

The ATP-cone domain maps to 1-92 (MHVIKRDGRQ…VSNLHKETKK (92 aa)). Residues 5–6 (KR), 11–17 (ERVMFDK), T53, and D57 contribute to the ATP site. K17 bears the N6-acetyllysine mark. 2 residues coordinate GDP: S202 and S217. A disulfide bridge connects residues C218 and C444. DTTP is bound by residues 226–228 (DSI), K243, R256, and 263–264 (AG). K376 carries the N6-acetyllysine modification. N427 contacts GDP. N427 serves as the catalytic Proton acceptor. The active-site Cysteine radical intermediate is C429. GDP contacts are provided by residues E431 and 604–607 (TAST). E431 serves as the catalytic Proton acceptor. A Phosphothreonine modification is found at T751.

This sequence belongs to the ribonucleoside diphosphate reductase large chain family. As to quaternary structure, heterodimer of a large and a small subunit. Heterodimer with small subunit RRM2 or RRM2B. The heterodimer with RRM2 has higher catalytic activity than the heterodimer with RRM2B. Interacts with AHCYL1 which inhibits its activity.

Its subcellular location is the cytoplasm. The enzyme catalyses a 2'-deoxyribonucleoside 5'-diphosphate + [thioredoxin]-disulfide + H2O = a ribonucleoside 5'-diphosphate + [thioredoxin]-dithiol. Its activity is regulated as follows. Under complex allosteric control mediated by deoxynucleoside triphosphates and ATP binding to separate specificity and activation sites on the M1 subunit. The type of nucleotide bound at the specificity site determines substrate preference. It seems probable that ATP makes the enzyme reduce CDP and UDP, dGTP favors ADP reduction and dTTP favors GDP reduction. Stimulated by ATP and inhibited by dATP binding to the activity site, the dATP inhibition is mediated by AHCYL1 which stabilizes dATP in the site. Its function is as follows. Provides the precursors necessary for DNA synthesis. Catalyzes the biosynthesis of deoxyribonucleotides from the corresponding ribonucleotides. This chain is Ribonucleoside-diphosphate reductase large subunit (RRM1), found in Homo sapiens (Human).